The following is a 295-amino-acid chain: NAD kinase (295 aa).

Aspartate 72 serves as the catalytic Proton acceptor. Residues 72-73, 146-147, arginine 157, lysine 174, aspartate 176, 187-192, and glutamine 247 contribute to the NAD(+) site; these read DG, ND, and TAYALS.

This sequence belongs to the NAD kinase family. A divalent metal cation is required as a cofactor.

Its subcellular location is the cytoplasm. It catalyses the reaction NAD(+) + ATP = ADP + NADP(+) + H(+). Its function is as follows. Involved in the regulation of the intracellular balance of NAD and NADP, and is a key enzyme in the biosynthesis of NADP. Catalyzes specifically the phosphorylation on 2'-hydroxyl of the adenosine moiety of NAD to yield NADP. This Ectopseudomonas mendocina (strain ymp) (Pseudomonas mendocina) protein is NAD kinase.